Consider the following 361-residue polypeptide: Cobalt-precorrin-5B C(1)-methyltransferase (361 aa).

Belongs to the CbiD family.

The enzyme catalyses Co-precorrin-5B + S-adenosyl-L-methionine = Co-precorrin-6A + S-adenosyl-L-homocysteine. Its pathway is cofactor biosynthesis; adenosylcobalamin biosynthesis; cob(II)yrinate a,c-diamide from sirohydrochlorin (anaerobic route): step 6/10. Functionally, catalyzes the methylation of C-1 in cobalt-precorrin-5B to form cobalt-precorrin-6A. The sequence is that of Cobalt-precorrin-5B C(1)-methyltransferase from Methylorubrum extorquens (strain CM4 / NCIMB 13688) (Methylobacterium extorquens).